We begin with the raw amino-acid sequence, 168 residues long: Small ribosomal subunit protein bS6 (168 aa).

A disordered region spans residues Glu97–Glu168. The segment covering Arg105–Ala158 has biased composition (basic and acidic residues).

This sequence belongs to the bacterial ribosomal protein bS6 family.

Functionally, binds together with bS18 to 16S ribosomal RNA. The protein is Small ribosomal subunit protein bS6 of Rhodopseudomonas palustris (strain BisB18).